We begin with the raw amino-acid sequence, 971 residues long: U2 snRNP component HSH155 (971 aa).

Disordered regions lie at residues 1–22 (MSHPIQFVNANNSDKSHQLGGQ) and 54–118 (TRTV…AVKE). Over residues 8–22 (VNANNSDKSHQLGGQ) the composition is skewed to polar residues. Positions 54–75 (TRTVQNREDSYHKRRFDMKFEP) are enriched in basic and acidic residues. A compositionally biased stretch (polar residues) spans 78 to 90 (DTQTVTSSENTQD). HEAT repeat units follow at residues 199–237 (MIFNRLLPILLDRSLEDQERHLMIKTIDRVLYQLGDLTK), 273–310 (AGLKTILTVMRPDIENEDEYVRNVTSRAAAVVAKALGV), 350–387 (NHLTGLMSCIKDCLMDDHVPVRIVTAHTLSTLAENSYP), 513–550 (LGCSYTIDKLLTPLRDEAEPFRTMAVHAVTRTVNLLGT), 596–633 (PFLAPIVSTILNHLKHKTPLVRQHAADLCAILIPVIKN), 680–717 (PPINQILPTLTPILRNKHRKVEVNTIKFVGLIGKLAPT), 722–759 (KEWMRICFELLELLKSTNKEIRRSANATFGFIAEAIGP), 792–829 (CGPYNVLPVIMNEYTTPETNVQNGVLKAMSFMFEYIGN), and 832–870 (KDYIYFITPLLEDALTDRDLVHRQTASNVITHLALNCSG).

Belongs to the SF3B1 family. As to quaternary structure, belongs to the CWC complex (or CEF1-associated complex), a spliceosome sub-complex reminiscent of a late-stage spliceosome composed of the U2, U5 and U6 snRNAs and at least BUD13, BUD31, BRR2, CDC40, CEF1, CLF1, CUS1, CWC2, CWC15, CWC21, CWC22, CWC23, CWC24, CWC25, CWC27, ECM2, HSH155, IST3, ISY1, LEA1, MSL1, NTC20, PRP8, PRP9, PRP11, PRP19, PRP21, PRP22, PRP45, PRP46, SLU7, SMB1, SMD1, SMD2, SMD3, SMX2, SMX3, SNT309, SNU114, SPP2, SYF1, SYF2, RSE1 and YJU2. Interacts with RDS3.

The protein resides in the nucleus. Contacts pre-mRNA on both sides of the branch site early in spliceosome assembly. This chain is U2 snRNP component HSH155 (HSH155), found in Saccharomyces cerevisiae (strain ATCC 204508 / S288c) (Baker's yeast).